A 1027-amino-acid polypeptide reads, in one-letter code: 2-oxoglutarate dehydrogenase, mitochondrial (1027 aa).

The thiamine diphosphate site is built by R315, D413, N446, I448, and Q674. Mg(2+) contacts are provided by D413, N446, and I448.

The protein belongs to the alpha-ketoglutarate dehydrogenase family. Homodimer. Component of the 2-oxoglutarate dehydrogenase complex. The cofactor is thiamine diphosphate. Mg(2+) is required as a cofactor.

The protein resides in the mitochondrion matrix. The catalysed reaction is N(6)-[(R)-lipoyl]-L-lysyl-[protein] + 2-oxoglutarate + H(+) = N(6)-[(R)-S(8)-succinyldihydrolipoyl]-L-lysyl-[protein] + CO2. The 2-oxoglutarate dehydrogenase complex catalyzes the overall conversion of 2-oxoglutarate to succinyl-CoA and CO(2). It contains multiple copies of three enzymatic components: 2-oxoglutarate dehydrogenase (E1), dihydrolipoamide succinyltransferase (E2) and lipoamide dehydrogenase (E3). This chain is 2-oxoglutarate dehydrogenase, mitochondrial (ogdh-1), found in Caenorhabditis briggsae.